The following is a 179-amino-acid chain: Large ribosomal subunit protein uL5 (179 aa).

It belongs to the universal ribosomal protein uL5 family. In terms of assembly, part of the 50S ribosomal subunit; part of the 5S rRNA/L5/L18/L25 subcomplex. Contacts the 5S rRNA and the P site tRNA. Forms a bridge to the 30S subunit in the 70S ribosome.

This is one of the proteins that bind and probably mediate the attachment of the 5S RNA into the large ribosomal subunit, where it forms part of the central protuberance. In the 70S ribosome it contacts protein S13 of the 30S subunit (bridge B1b), connecting the 2 subunits; this bridge is implicated in subunit movement. Contacts the P site tRNA; the 5S rRNA and some of its associated proteins might help stabilize positioning of ribosome-bound tRNAs. This chain is Large ribosomal subunit protein uL5, found in Deinococcus geothermalis (strain DSM 11300 / CIP 105573 / AG-3a).